We begin with the raw amino-acid sequence, 232 residues long: Ubiquinone biosynthesis O-methyltransferase (232 aa).

S-adenosyl-L-methionine-binding residues include Arg36, Gly55, Asp76, and Leu120.

It belongs to the methyltransferase superfamily. UbiG/COQ3 family.

It carries out the reaction a 3-demethylubiquinol + S-adenosyl-L-methionine = a ubiquinol + S-adenosyl-L-homocysteine + H(+). The enzyme catalyses a 3-(all-trans-polyprenyl)benzene-1,2-diol + S-adenosyl-L-methionine = a 2-methoxy-6-(all-trans-polyprenyl)phenol + S-adenosyl-L-homocysteine + H(+). The protein operates within cofactor biosynthesis; ubiquinone biosynthesis. Its function is as follows. O-methyltransferase that catalyzes the 2 O-methylation steps in the ubiquinone biosynthetic pathway. The polypeptide is Ubiquinone biosynthesis O-methyltransferase (Pseudomonas putida (strain W619)).